A 264-amino-acid polypeptide reads, in one-letter code: MGCWLKQPQGITTMMGCWLTKSRENILDNVIVTDAKLKISMNFEDCAKKIRKVACQFEVKSCITDIDDQKVLVSGDFNLHKLVKTLKKKTGKKIEIVTKNEKSSEDKVDDTVQNEDSKDEIVPQNADKPETSIMEVEFDIPFLCEKYEKDFGKVISKCTGVETYVVDLENKKVVVIGNFDKDELSRKLNKKMHQKIKKAEKERQEWESEMMLREAEEEKRLADIYEEIDKDRNVSLNPITDYEKEMAKHYYMFSDENPNACSIS.

2 consecutive HMA domains span residues 32-95 (VTDA…KKIE) and 133-204 (IMEV…KERQ). Residues 185–218 (SRKLNKKMHQKIKKAEKERQEWESEMMLREAEEE) are a coiled coil. Cysteine 261 carries the cysteine methyl ester modification. Cysteine 261 is lipidated: S-farnesyl cysteine. Residues 262-264 (SIS) constitute a propeptide, removed in mature form.

It belongs to the HIPP family.

Probable heavy-metal-binding protein. In Arabidopsis thaliana (Mouse-ear cress), this protein is Heavy metal-associated isoprenylated plant protein 17.